Consider the following 58-residue polypeptide: Preprotein translocase subunit SecG (58 aa).

Residues Met-1–Ser-33 are Cytoplasmic-facing. Residues Pro-34 to Leu-55 form a helical membrane-spanning segment. Residues Pro-56–Leu-58 lie on the Extracellular side of the membrane.

It belongs to the SEC61-beta family. Component of the protein translocase complex. Heterotrimer consisting of alpha (SecY), beta (SecG) and gamma (SecE) subunits. Can form oligomers of the heterotrimer.

The protein localises to the cell membrane. In terms of biological role, involved in protein export. The function of the beta subunit is unknown, but it may be involved in stabilization of the trimeric complex. In Pyrobaculum arsenaticum (strain DSM 13514 / JCM 11321 / PZ6), this protein is Preprotein translocase subunit SecG.